The sequence spans 234 residues: Phosphoribosylformylglycinamidine synthase subunit PurQ (234 aa).

One can recognise a Glutamine amidotransferase type-1 domain in the interval 4–234; sequence RIGVVTFPGS…TSILKKLVNA (231 aa). Catalysis depends on Cys87, which acts as the Nucleophile. Residues His204 and Glu206 contribute to the active site.

In terms of assembly, part of the FGAM synthase complex composed of 1 PurL, 1 PurQ and 2 PurS subunits.

It localises to the cytoplasm. The catalysed reaction is N(2)-formyl-N(1)-(5-phospho-beta-D-ribosyl)glycinamide + L-glutamine + ATP + H2O = 2-formamido-N(1)-(5-O-phospho-beta-D-ribosyl)acetamidine + L-glutamate + ADP + phosphate + H(+). It carries out the reaction L-glutamine + H2O = L-glutamate + NH4(+). The protein operates within purine metabolism; IMP biosynthesis via de novo pathway; 5-amino-1-(5-phospho-D-ribosyl)imidazole from N(2)-formyl-N(1)-(5-phospho-D-ribosyl)glycinamide: step 1/2. Part of the phosphoribosylformylglycinamidine synthase complex involved in the purines biosynthetic pathway. Catalyzes the ATP-dependent conversion of formylglycinamide ribonucleotide (FGAR) and glutamine to yield formylglycinamidine ribonucleotide (FGAM) and glutamate. The FGAM synthase complex is composed of three subunits. PurQ produces an ammonia molecule by converting glutamine to glutamate. PurL transfers the ammonia molecule to FGAR to form FGAM in an ATP-dependent manner. PurS interacts with PurQ and PurL and is thought to assist in the transfer of the ammonia molecule from PurQ to PurL. The sequence is that of Phosphoribosylformylglycinamidine synthase subunit PurQ from Streptomyces avermitilis (strain ATCC 31267 / DSM 46492 / JCM 5070 / NBRC 14893 / NCIMB 12804 / NRRL 8165 / MA-4680).